Here is a 408-residue protein sequence, read N- to C-terminus: Zinc chaperone AztD (408 aa).

Positions 1–21 (MLRHLAGASALALTLAGAGFA) are cleaved as a signal peptide. The N-terminal Zn(2+)-binding motif; binds a third Zn(2+) with low affinity signature appears at 23 to 29 (DHDHDHE). 7 residues coordinate Zn(2+): histidine 99, histidine 102, aspartate 104, histidine 124, histidine 167, histidine 218, and histidine 408. Residues cysteine 214 and cysteine 231 are joined by a disulfide bond.

In terms of assembly, monomer.

The protein resides in the periplasm. In terms of biological role, acts as a zinc chaperone in the AztABCD zinc transport system. Directly transfers one zinc cation to the solute binding protein AztC; the transfer occurs without the formation of a stable interaction. Binds 3 Zn(2+), two with high affinity and one with low affinity, and transfers only Zn(2+) bound to site 2 to AztC. Likely functions to store zinc in the periplasm and may be important for zinc accumulation in zinc-limited environments. In Paracoccus denitrificans (strain Pd 1222), this protein is Zinc chaperone AztD.